The primary structure comprises 248 residues: 4-hydroxy-tetrahydrodipicolinate reductase (248 aa).

Residues Asp32, 74–76 (GTT), and 99–102 (SANF) each bind NAD(+). His134 serves as the catalytic Proton donor/acceptor. His135 contacts (S)-2,3,4,5-tetrahydrodipicolinate. The Proton donor role is filled by Lys138. 144-145 (GT) is a binding site for (S)-2,3,4,5-tetrahydrodipicolinate.

Belongs to the DapB family.

The protein resides in the cytoplasm. The enzyme catalyses (S)-2,3,4,5-tetrahydrodipicolinate + NAD(+) + H2O = (2S,4S)-4-hydroxy-2,3,4,5-tetrahydrodipicolinate + NADH + H(+). The catalysed reaction is (S)-2,3,4,5-tetrahydrodipicolinate + NADP(+) + H2O = (2S,4S)-4-hydroxy-2,3,4,5-tetrahydrodipicolinate + NADPH + H(+). Its pathway is amino-acid biosynthesis; L-lysine biosynthesis via DAP pathway; (S)-tetrahydrodipicolinate from L-aspartate: step 4/4. Catalyzes the conversion of 4-hydroxy-tetrahydrodipicolinate (HTPA) to tetrahydrodipicolinate. This Pelodictyon phaeoclathratiforme (strain DSM 5477 / BU-1) protein is 4-hydroxy-tetrahydrodipicolinate reductase.